Consider the following 138-residue polypeptide: DNA-directed RNA polymerase subunit omega (138 aa).

The disordered stretch occupies residues 101-138 (AEDDDTLEADGLTIHDGADSDLDLSDDAGQDTDEADED). Acidic residues predominate over residues 119 to 138 (DSDLDLSDDAGQDTDEADED).

Belongs to the RNA polymerase subunit omega family. As to quaternary structure, the RNAP catalytic core consists of 2 alpha, 1 beta, 1 beta' and 1 omega subunit. When a sigma factor is associated with the core the holoenzyme is formed, which can initiate transcription.

The catalysed reaction is RNA(n) + a ribonucleoside 5'-triphosphate = RNA(n+1) + diphosphate. Functionally, promotes RNA polymerase assembly. Latches the N- and C-terminal regions of the beta' subunit thereby facilitating its interaction with the beta and alpha subunits. This Rhodospirillum rubrum (strain ATCC 11170 / ATH 1.1.1 / DSM 467 / LMG 4362 / NCIMB 8255 / S1) protein is DNA-directed RNA polymerase subunit omega.